Here is a 411-residue protein sequence, read N- to C-terminus: Gamma-glutamyl phosphate reductase (411 aa).

Belongs to the gamma-glutamyl phosphate reductase family.

It localises to the cytoplasm. The enzyme catalyses L-glutamate 5-semialdehyde + phosphate + NADP(+) = L-glutamyl 5-phosphate + NADPH + H(+). The protein operates within amino-acid biosynthesis; L-proline biosynthesis; L-glutamate 5-semialdehyde from L-glutamate: step 2/2. Functionally, catalyzes the NADPH-dependent reduction of L-glutamate 5-phosphate into L-glutamate 5-semialdehyde and phosphate. The product spontaneously undergoes cyclization to form 1-pyrroline-5-carboxylate. In Nautilia profundicola (strain ATCC BAA-1463 / DSM 18972 / AmH), this protein is Gamma-glutamyl phosphate reductase.